We begin with the raw amino-acid sequence, 286 residues long: 2,3,4,5-tetrahydropyridine-2,6-dicarboxylate N-succinyltransferase (286 aa).

Positions 109 and 146 each coordinate substrate.

The protein belongs to the transferase hexapeptide repeat family. In terms of assembly, homotrimer.

Its subcellular location is the cytoplasm. It carries out the reaction (S)-2,3,4,5-tetrahydrodipicolinate + succinyl-CoA + H2O = (S)-2-succinylamino-6-oxoheptanedioate + CoA. Its pathway is amino-acid biosynthesis; L-lysine biosynthesis via DAP pathway; LL-2,6-diaminopimelate from (S)-tetrahydrodipicolinate (succinylase route): step 1/3. This Bartonella tribocorum (strain CIP 105476 / IBS 506) protein is 2,3,4,5-tetrahydropyridine-2,6-dicarboxylate N-succinyltransferase.